The sequence spans 682 residues: DNA ligase (682 aa).

Residues Asp-38–Asp-42, Ser-87–Ile-88, and Glu-119 each bind NAD(+). Catalysis depends on Lys-121, which acts as the N6-AMP-lysine intermediate. The NAD(+) site is built by Arg-142, Glu-181, Lys-298, and Lys-322. Residues Cys-416, Cys-419, Cys-434, and Cys-439 each coordinate Zn(2+). The region spanning Gly-601–Arg-682 is the BRCT domain.

Belongs to the NAD-dependent DNA ligase family. LigA subfamily. Requires Mg(2+) as cofactor. It depends on Mn(2+) as a cofactor.

The catalysed reaction is NAD(+) + (deoxyribonucleotide)n-3'-hydroxyl + 5'-phospho-(deoxyribonucleotide)m = (deoxyribonucleotide)n+m + AMP + beta-nicotinamide D-nucleotide.. Its function is as follows. DNA ligase that catalyzes the formation of phosphodiester linkages between 5'-phosphoryl and 3'-hydroxyl groups in double-stranded DNA using NAD as a coenzyme and as the energy source for the reaction. It is essential for DNA replication and repair of damaged DNA. The protein is DNA ligase of Desulfosudis oleivorans (strain DSM 6200 / JCM 39069 / Hxd3) (Desulfococcus oleovorans).